A 159-amino-acid polypeptide reads, in one-letter code: Transcriptional repressor NrdR (159 aa).

Polar residues predominate over residues 1 to 11 (MQCPTCQNTDS). Residues 1-21 (MQCPTCQNTDSRVLESRSADS) are disordered. Residues 3 to 34 (CPTCQNTDSRVLESRSADSGKSVRRRRECLNC) fold into a zinc finger. Residues 49 to 139 (VSVLKKDGSR…VYRKFNGVKD (91 aa)) form the ATP-cone domain.

Belongs to the NrdR family. Requires Zn(2+) as cofactor.

Negatively regulates transcription of bacterial ribonucleotide reductase nrd genes and operons by binding to NrdR-boxes. The polypeptide is Transcriptional repressor NrdR (Prochlorococcus marinus (strain MIT 9301)).